Reading from the N-terminus, the 354-residue chain is Histidinol-phosphate aminotransferase (354 aa).

An N6-(pyridoxal phosphate)lysine modification is found at K210.

It belongs to the class-II pyridoxal-phosphate-dependent aminotransferase family. Histidinol-phosphate aminotransferase subfamily. Homodimer. The cofactor is pyridoxal 5'-phosphate.

It carries out the reaction L-histidinol phosphate + 2-oxoglutarate = 3-(imidazol-4-yl)-2-oxopropyl phosphate + L-glutamate. It functions in the pathway amino-acid biosynthesis; L-histidine biosynthesis; L-histidine from 5-phospho-alpha-D-ribose 1-diphosphate: step 7/9. This is Histidinol-phosphate aminotransferase from Clostridium botulinum (strain Langeland / NCTC 10281 / Type F).